A 238-amino-acid chain; its full sequence is Ribonuclease PH (238 aa).

Residues arginine 86 and 124 to 126 (GTR) each bind phosphate.

Belongs to the RNase PH family. In terms of assembly, homohexameric ring arranged as a trimer of dimers.

It catalyses the reaction tRNA(n+1) + phosphate = tRNA(n) + a ribonucleoside 5'-diphosphate. In terms of biological role, phosphorolytic 3'-5' exoribonuclease that plays an important role in tRNA 3'-end maturation. Removes nucleotide residues following the 3'-CCA terminus of tRNAs; can also add nucleotides to the ends of RNA molecules by using nucleoside diphosphates as substrates, but this may not be physiologically important. Probably plays a role in initiation of 16S rRNA degradation (leading to ribosome degradation) during starvation. The polypeptide is Ribonuclease PH (Vibrio parahaemolyticus serotype O3:K6 (strain RIMD 2210633)).